Consider the following 404-residue polypeptide: Cysteine desulfurase IscS (404 aa).

Residues 75–76 (AT), Asn155, Gln183, and 203–205 (SGH) each bind pyridoxal 5'-phosphate. Lys206 bears the N6-(pyridoxal phosphate)lysine mark. Thr243 provides a ligand contact to pyridoxal 5'-phosphate. Catalysis depends on Cys328, which acts as the Cysteine persulfide intermediate. Cys328 is a [2Fe-2S] cluster binding site.

The protein belongs to the class-V pyridoxal-phosphate-dependent aminotransferase family. NifS/IscS subfamily. In terms of assembly, homodimer. Forms a heterotetramer with IscU, interacts with other sulfur acceptors. Pyridoxal 5'-phosphate is required as a cofactor.

Its subcellular location is the cytoplasm. The catalysed reaction is (sulfur carrier)-H + L-cysteine = (sulfur carrier)-SH + L-alanine. It participates in cofactor biosynthesis; iron-sulfur cluster biosynthesis. Functionally, master enzyme that delivers sulfur to a number of partners involved in Fe-S cluster assembly, tRNA modification or cofactor biosynthesis. Catalyzes the removal of elemental sulfur atoms from cysteine to produce alanine. Functions as a sulfur delivery protein for Fe-S cluster synthesis onto IscU, an Fe-S scaffold assembly protein, as well as other S acceptor proteins. The sequence is that of Cysteine desulfurase IscS from Shewanella baltica (strain OS223).